Reading from the N-terminus, the 177-residue chain is ATP synthase subunit delta (177 aa).

It belongs to the ATPase delta chain family. As to quaternary structure, F-type ATPases have 2 components, F(1) - the catalytic core - and F(0) - the membrane proton channel. F(1) has five subunits: alpha(3), beta(3), gamma(1), delta(1), epsilon(1). F(0) has three main subunits: a(1), b(2) and c(10-14). The alpha and beta chains form an alternating ring which encloses part of the gamma chain. F(1) is attached to F(0) by a central stalk formed by the gamma and epsilon chains, while a peripheral stalk is formed by the delta and b chains.

It is found in the cell inner membrane. Functionally, f(1)F(0) ATP synthase produces ATP from ADP in the presence of a proton or sodium gradient. F-type ATPases consist of two structural domains, F(1) containing the extramembraneous catalytic core and F(0) containing the membrane proton channel, linked together by a central stalk and a peripheral stalk. During catalysis, ATP synthesis in the catalytic domain of F(1) is coupled via a rotary mechanism of the central stalk subunits to proton translocation. Its function is as follows. This protein is part of the stalk that links CF(0) to CF(1). It either transmits conformational changes from CF(0) to CF(1) or is implicated in proton conduction. This Shewanella halifaxensis (strain HAW-EB4) protein is ATP synthase subunit delta.